We begin with the raw amino-acid sequence, 262 residues long: uncharacterized protein (262 aa).

A run of 6 helical transmembrane segments spans residues 21 to 41 (ILITYFLCWAGFLFSFSVGKF), 94 to 114 (IVSNFMGCLIIMFALGALAYL), 139 to 159 (LLILFIFTVINPLTGLIGVNL), 164 to 184 (LIAVLPHGFFEFFGFATAVVV), 205 to 225 (IVILIACSFIFIFIAGMLEPI), and 240 to 260 (LLAAFATGYKNLFLYLISMLF).

Its subcellular location is the cell membrane. This is an uncharacterized protein from Methanocaldococcus jannaschii (strain ATCC 43067 / DSM 2661 / JAL-1 / JCM 10045 / NBRC 100440) (Methanococcus jannaschii).